The sequence spans 348 residues: Probable malate dehydrogenase 2, mitochondrial (348 aa).

Residues 1–9 (MNKILTRSF) constitute a mitochondrion transit peptide. 31 to 37 (GASGQIG) serves as a coordination point for NAD(+). Arg-112 and Arg-118 together coordinate substrate. NAD(+)-binding positions include Asn-125, Gln-132, and 150–152 (VGN). Positions 152 and 183 each coordinate substrate. Residue His-208 is the Proton acceptor of the active site.

This sequence belongs to the LDH/MDH superfamily. MDH type 2 family. As to quaternary structure, homodimer.

The protein resides in the mitochondrion. It carries out the reaction (S)-malate + NAD(+) = oxaloacetate + NADH + H(+). Functionally, catalyzes the reversible oxidation of malate to oxaloacetate. The chain is Probable malate dehydrogenase 2, mitochondrial (mdhB) from Dictyostelium discoideum (Social amoeba).